A 154-amino-acid chain; its full sequence is MIQIDFGTVITSAITAVFFTGGTNYVLQKKNRKGNEIFTKGYILIDEIYNINNKRIETAAAFVPFYNHPEGYLEKLHTDYFKELSAFELIVKKFSILFDKELNIKLQEYINYLREVEVALRGFMNDDPIIEVNFNQEYIERLIDEITNLIKKHI.

This is an uncharacterized protein from Bacillus subtilis (strain 168).